The chain runs to 89 residues: Small ribosomal subunit protein uS15 (89 aa).

The protein belongs to the universal ribosomal protein uS15 family. In terms of assembly, part of the 30S ribosomal subunit. Forms a bridge to the 50S subunit in the 70S ribosome, contacting the 23S rRNA.

In terms of biological role, one of the primary rRNA binding proteins, it binds directly to 16S rRNA where it helps nucleate assembly of the platform of the 30S subunit by binding and bridging several RNA helices of the 16S rRNA. Its function is as follows. Forms an intersubunit bridge (bridge B4) with the 23S rRNA of the 50S subunit in the ribosome. The polypeptide is Small ribosomal subunit protein uS15 (Marinobacter nauticus (strain ATCC 700491 / DSM 11845 / VT8) (Marinobacter aquaeolei)).